Reading from the N-terminus, the 132-residue chain is Arsenate reductase 1 (132 aa).

Residues cysteine 10, cysteine 82, and cysteine 89 each act as nucleophile in the active site. Disulfide bonds link cysteine 10-cysteine 82 and cysteine 82-cysteine 89.

Belongs to the low molecular weight phosphotyrosine protein phosphatase family. Thioredoxin-coupled ArsC subfamily.

It is found in the cytoplasm. It catalyses the reaction arsenate + [thioredoxin]-dithiol + H(+) = arsenite + [thioredoxin]-disulfide + H2O. In terms of biological role, catalyzes the reduction of arsenate [As(V)] to arsenite [As(III)]. This Staphylococcus epidermidis (strain ATCC 35984 / DSM 28319 / BCRC 17069 / CCUG 31568 / BM 3577 / RP62A) protein is Arsenate reductase 1.